Here is a 172-residue protein sequence, read N- to C-terminus: Adenine phosphoribosyltransferase (172 aa).

It belongs to the purine/pyrimidine phosphoribosyltransferase family. As to quaternary structure, homodimer.

The protein localises to the cytoplasm. It carries out the reaction AMP + diphosphate = 5-phospho-alpha-D-ribose 1-diphosphate + adenine. Its pathway is purine metabolism; AMP biosynthesis via salvage pathway; AMP from adenine: step 1/1. Functionally, catalyzes a salvage reaction resulting in the formation of AMP, that is energically less costly than de novo synthesis. The chain is Adenine phosphoribosyltransferase from Streptococcus pyogenes serotype M5 (strain Manfredo).